The following is a 147-amino-acid chain: Large ribosomal subunit protein bL9 (147 aa).

This sequence belongs to the bacterial ribosomal protein bL9 family.

Its function is as follows. Binds to the 23S rRNA. The chain is Large ribosomal subunit protein bL9 from Shouchella clausii (strain KSM-K16) (Alkalihalobacillus clausii).